The sequence spans 360 residues: Alpha-methylacyl-CoA racemase (360 aa).

Substrate-binding positions include Arg-38, 59 to 62 (ADLK), 83 to 85 (GYR), Arg-91, and 125 to 130 (GHDINY). His-126 acts as the Proton acceptor in catalysis. The active-site Proton donor is the Asp-156.

This sequence belongs to the CoA-transferase III family. Homodimer.

It catalyses the reaction a (2S)-2-methylacyl-CoA = a (2R)-2-methylacyl-CoA. It carries out the reaction (2S)-2-methyltetradecanoyl-CoA = (2R)-2-methyltetradecanoyl-CoA. The enzyme catalyses (2R)-pristanoyl-CoA = (2S)-pristanoyl-CoA. The catalysed reaction is (25S)-3-oxocholest-4-en-26-oyl-CoA = (25R)-3-oxocholest-4-en-26-oyl-CoA. It catalyses the reaction (2S)-ibuprofenoyl-CoA = (2R)-ibuprofenoyl-CoA. Its activity is regulated as follows. Inactivated by N,N-dialkylcarbamoyl-CoA substrate-product analogs. Catalyzes the epimerization of (2R)- and (2S)-methylacyl-coenzyme A (CoA) thioesters. Accepts as substrates a wide range of alpha-methylacyl-CoAs, including (2R)-2-methylmyristoyl-CoA and (2S)-2-methylmyristoyl-CoA, (2R)-pristanoyl-CoA and (2S)-pristanoyl-CoA, and the cholesterol esters (25R)-3-oxo-cholest-4-en-26-oyl-CoA and (25S)-3-oxo-cholest-4-en-26-oyl-CoA. Can also catalyze the interconversion of the non-physiologic substrates (2R)-ibuprofenoyl-CoA and (2S)-ibuprofenoyl-CoA, which are potential competitive inhibitors of the enzyme. This is Alpha-methylacyl-CoA racemase from Mycobacterium tuberculosis (strain ATCC 25618 / H37Rv).